The following is a 268-amino-acid chain: Phosphoethanolamine/phosphocholine phosphatase (268 aa).

Asp32 functions as the Nucleophile in the catalytic mechanism. Residues Asp32 and Asp34 each contribute to the Mg(2+) site. The active-site Proton donor is Asp34. Asp43 and Asp123 together coordinate substrate. Asp203 is a binding site for Mg(2+).

It belongs to the HAD-like hydrolase superfamily. PHOSPHO family. Mg(2+) is required as a cofactor. As to expression, expressed at sites of mineralization in bone and cartilage. Highly expressed in hypertrophic chondrocytes compared to non-chondrogenic tissues. Expressed in chondrocytes but not in heart, liver, lung, kidney, spleen, muscle, adipose tissues not duodenum. In diaphyseal cortical bone, it is expressed in the osteoid layer of the periosteum, forming surfaces of growing osteons, and newly formed osteocytes, whereas it is not expressed in the endosteum and closed osteons. In growth plate cartilage, it is limited to the early hypertrophic chondrocytes and the ossification groove of Ranvier. Highly expressed on the mineralization surfaces of the cartilage remnants and trabecular bone within the primary spongiosa. Expressed in 17-day-old embryonic calvaria, the osteoid present on the intramembranous and periosteal bone surfaces but not in soft tissues examined.

The protein localises to the extracellular vesicle. The catalysed reaction is phosphoethanolamine + H2O = ethanolamine + phosphate. The enzyme catalyses phosphocholine + H2O = choline + phosphate. In terms of biological role, phosphatase that has a high activity toward phosphoethanolamine (PEA) and phosphocholine (PCho). Involved in the generation of inorganic phosphate for bone mineralization. In Gallus gallus (Chicken), this protein is Phosphoethanolamine/phosphocholine phosphatase (PHOSPHO1).